Here is a 284-residue protein sequence, read N- to C-terminus: tRNA pseudouridine synthase A (284 aa).

The Nucleophile role is filled by aspartate 62. Tyrosine 120 contributes to the substrate binding site.

The protein belongs to the tRNA pseudouridine synthase TruA family. As to quaternary structure, homodimer.

The catalysed reaction is uridine(38/39/40) in tRNA = pseudouridine(38/39/40) in tRNA. Formation of pseudouridine at positions 38, 39 and 40 in the anticodon stem and loop of transfer RNAs. The protein is tRNA pseudouridine synthase A of Thermosynechococcus vestitus (strain NIES-2133 / IAM M-273 / BP-1).